We begin with the raw amino-acid sequence, 282 residues long: uncharacterized protein (282 aa).

Transmembrane regions (helical) follow at residues 18–38 (PIVL…WAGT), 40–60 (LLVV…VTIG), 87–107 (LWIV…TPVV), 119–139 (ALHF…GAMV), 164–184 (IPVD…PMLI), and 260–280 (VTLA…SLIL).

The protein belongs to the CbiQ family.

The protein resides in the cell membrane. This is an uncharacterized protein from Mycobacterium tuberculosis (strain CDC 1551 / Oshkosh).